The chain runs to 227 residues: Cytochrome c oxidase subunit 2 (227 aa).

The Mitochondrial intermembrane segment spans residues 1–14 (MAYPFQLGLQDATS). The helical transmembrane segment at 15–45 (PIMEELTNFHDHTLMIVFLISSLVLYLISLM) threads the bilayer. The Mitochondrial matrix portion of the chain corresponds to 46–59 (LSTKLIHTSTMDAQ). The chain crosses the membrane as a helical span at residues 60-87 (EVETIWTILPAIILIMIALPSLRILYMM). The Mitochondrial intermembrane segment spans residues 88–227 (DEINNPALTV…LFENWSISMS (140 aa)). 6 residues coordinate Cu cation: H161, C196, E198, C200, H204, and M207. Residue E198 coordinates Mg(2+).

This sequence belongs to the cytochrome c oxidase subunit 2 family. As to quaternary structure, component of the cytochrome c oxidase (complex IV, CIV), a multisubunit enzyme composed of 14 subunits. The complex is composed of a catalytic core of 3 subunits MT-CO1, MT-CO2 and MT-CO3, encoded in the mitochondrial DNA, and 11 supernumerary subunits COX4I, COX5A, COX5B, COX6A, COX6B, COX6C, COX7A, COX7B, COX7C, COX8 and NDUFA4, which are encoded in the nuclear genome. The complex exists as a monomer or a dimer and forms supercomplexes (SCs) in the inner mitochondrial membrane with NADH-ubiquinone oxidoreductase (complex I, CI) and ubiquinol-cytochrome c oxidoreductase (cytochrome b-c1 complex, complex III, CIII), resulting in different assemblies (supercomplex SCI(1)III(2)IV(1) and megacomplex MCI(2)III(2)IV(2)). Found in a complex with TMEM177, COA6, COX18, COX20, SCO1 and SCO2. Interacts with TMEM177 in a COX20-dependent manner. Interacts with COX20. Interacts with COX16. The cofactor is Cu cation.

The protein localises to the mitochondrion inner membrane. It carries out the reaction 4 Fe(II)-[cytochrome c] + O2 + 8 H(+)(in) = 4 Fe(III)-[cytochrome c] + 2 H2O + 4 H(+)(out). Functionally, component of the cytochrome c oxidase, the last enzyme in the mitochondrial electron transport chain which drives oxidative phosphorylation. The respiratory chain contains 3 multisubunit complexes succinate dehydrogenase (complex II, CII), ubiquinol-cytochrome c oxidoreductase (cytochrome b-c1 complex, complex III, CIII) and cytochrome c oxidase (complex IV, CIV), that cooperate to transfer electrons derived from NADH and succinate to molecular oxygen, creating an electrochemical gradient over the inner membrane that drives transmembrane transport and the ATP synthase. Cytochrome c oxidase is the component of the respiratory chain that catalyzes the reduction of oxygen to water. Electrons originating from reduced cytochrome c in the intermembrane space (IMS) are transferred via the dinuclear copper A center (CU(A)) of subunit 2 and heme A of subunit 1 to the active site in subunit 1, a binuclear center (BNC) formed by heme A3 and copper B (CU(B)). The BNC reduces molecular oxygen to 2 water molecules using 4 electrons from cytochrome c in the IMS and 4 protons from the mitochondrial matrix. The protein is Cytochrome c oxidase subunit 2 (MT-CO2) of Gerbilliscus robustus (Fringe-tailed gerbil).